The following is a 263-amino-acid chain: Probable ribosomal RNA small subunit methyltransferase A (263 aa).

S-adenosyl-L-methionine is bound by residues Leu-12, Gly-37, Glu-58, Asp-83, and Asn-100.

This sequence belongs to the class I-like SAM-binding methyltransferase superfamily. rRNA adenine N(6)-methyltransferase family. RsmA subfamily.

It localises to the cytoplasm. Its function is as follows. Specifically dimethylates two adjacent adenosines in the loop of a conserved hairpin near the 3'-end of 16S rRNA in the 30S particle. May play a critical role in biogenesis of 30S subunits. The polypeptide is Probable ribosomal RNA small subunit methyltransferase A (Methanococcus maripaludis (strain C6 / ATCC BAA-1332)).